Consider the following 135-residue polypeptide: Large ribosomal subunit protein uL16 (135 aa).

Belongs to the universal ribosomal protein uL16 family. Part of the 50S ribosomal subunit.

Functionally, binds 23S rRNA and is also seen to make contacts with the A and possibly P site tRNAs. The chain is Large ribosomal subunit protein uL16 from Coprothermobacter proteolyticus (strain ATCC 35245 / DSM 5265 / OCM 4 / BT).